The primary structure comprises 440 residues: Protein scalloped (440 aa).

The tract at residues 32–65 (TEQQAVGPGTIPSPWTPVNAGPPGALGSADTNGS) is disordered. The segment at residues 86-162 (SADAEGVWSP…QVLARRKLRE (77 aa)) is a DNA-binding region (TEA).

As to quaternary structure, the C-terminus of sd interacts with the C-terminal serine-rich protein domain of vg, to form a complex which acts as a selector for wing development. Interacts (via C-terminus) with yki (via N-terminus) and this interaction enhances its transcriptional activity. As to expression, subset of neuroblasts in the central nervous system and in the peripheral sense organs of the embryo. Expressed in the developing wing primordia initially along the D/V wing boundary, and by the late third larval instar, maximal expression is seen in cells at the D/V wing disk boundary. Less expression in cells located farther from this boundary. Also expressed in wing progenitor cells.

It localises to the nucleus. In terms of biological role, transcription factor which plays a key role in the Hippo/SWH (Sav/Wts/Hpo) signaling pathway, a signaling pathway that plays a pivotal role in organ size control and tumor suppression by restricting proliferation and promoting apoptosis. The core of this pathway is composed of a kinase cascade wherein Hippo (Hpo), in complex with its regulatory protein Salvador (Sav), phosphorylates and activates Warts (Wts) in complex with its regulatory protein Mats, which in turn phosphorylates and inactivates the Yorkie (Yki) oncoprotein. The Hippo/SWH signaling pathway inhibits the activity of the transcriptional complex formed by Scalloped (sd) and Yki and the target genes of this pathway include cyclin-E (cycE), diap1 and bantam. Sd promotes nuclear localization of Yki. Involved in the regulation of cell-specific gene expression during development, particularly in the differentiation of the nervous system. When in combination with vestigial (vg) it acts as a transcriptional activation complex that regulates gene expression in the wing. Binding to vg switches the DNA target selectivity of sd. Required autonomously for cell proliferation and viability within the wing blade. Required for proper sensory organ precursor (SOP) differentiation at the wing margin; required for correct expression of sens. In Drosophila melanogaster (Fruit fly), this protein is Protein scalloped (sd).